The primary structure comprises 748 residues: Catalase-peroxidase 2 (748 aa).

Residues Met1–Glu24 show a composition bias toward polar residues. A disordered region spans residues Met1–Asp43. A cross-link (tryptophyl-tyrosyl-methioninium (Trp-Tyr) (with M-264)) is located at residues Trp113–Tyr238. The active-site Proton acceptor is His114. The tryptophyl-tyrosyl-methioninium (Tyr-Met) (with W-113) cross-link spans Tyr238–Met264. His279 lines the heme b pocket.

Belongs to the peroxidase family. Peroxidase/catalase subfamily. In terms of assembly, homotetramer. Heme b is required as a cofactor. Post-translationally, formation of the three residue Trp-Tyr-Met cross-link is important for the catalase, but not the peroxidase activity of the enzyme.

It catalyses the reaction H2O2 + AH2 = A + 2 H2O. The enzyme catalyses 2 H2O2 = O2 + 2 H2O. Its function is as follows. Bifunctional enzyme with both catalase and broad-spectrum peroxidase activity. May play a role in the intracellular survival of mycobacteria. In Mycolicibacterium smegmatis (strain ATCC 700084 / mc(2)155) (Mycobacterium smegmatis), this protein is Catalase-peroxidase 2.